Consider the following 249-residue polypeptide: SRR1-like protein (249 aa).

The segment at 1 to 40 (MAAAALEPWSAVAPRRRKRAAGRRPRPGEGPRAEPEADGE) is disordered. Basic residues predominate over residues 14-25 (PRRRKRAAGRRP). Positions 26–40 (RPGEGPRAEPEADGE) are enriched in basic and acidic residues.

This sequence belongs to the SRR1 family.

It is found in the cytoplasm. Its function is as follows. Plays a role in the regulation of heme biosynthesis and in the regulation of the expression of core clock genes. In Mus musculus (Mouse), this protein is SRR1-like protein (Srrd).